A 148-amino-acid polypeptide reads, in one-letter code: Ribonuclease pancreatic (148 aa).

Positions 1–25 (MGLEKSLMLFPLLVLVLGLVQPSLG) are cleaved as a signal peptide. Substrate is bound by residues Lys32 and Arg35. Residue His37 is the Proton acceptor of the active site. 4 disulfide bridges follow: Cys50/Cys108, Cys64/Cys119, Cys82/Cys134, and Cys89/Cys96. Residues 65–69 (KPVNT), Lys90, and Arg109 each bind substrate. His143 (proton donor) is an active-site residue.

It belongs to the pancreatic ribonuclease family. As to quaternary structure, monomer. Interacts with and forms tight 1:1 complexes with RNH1. Dimerization of two such complexes may occur. Interaction with RNH1 inhibits this protein. Pancreas.

Its subcellular location is the secreted. The enzyme catalyses an [RNA] containing cytidine + H2O = an [RNA]-3'-cytidine-3'-phosphate + a 5'-hydroxy-ribonucleotide-3'-[RNA].. The catalysed reaction is an [RNA] containing uridine + H2O = an [RNA]-3'-uridine-3'-phosphate + a 5'-hydroxy-ribonucleotide-3'-[RNA].. In terms of biological role, endonuclease that catalyzes the cleavage of RNA on the 3' side of pyrimidine nucleotides. Acts on single-stranded and double-stranded RNA. The sequence is that of Ribonuclease pancreatic (RNASE1) from Gerbilliscus gambianus (Gambian gerbil).